Here is a 67-residue protein sequence, read N- to C-terminus: Large ribosomal subunit protein uL29 (67 aa).

Belongs to the universal ribosomal protein uL29 family.

The protein is Large ribosomal subunit protein uL29 of Ehrlichia canis (strain Jake).